A 206-amino-acid polypeptide reads, in one-letter code: MILSDKDIFDYVNSKRVLIEPFNSKFVGPCSYDVTLGSEFIKYKDDVYDLKKSLSHNKFEIENSIMICPLNHHLDETIIKNYKEKYNVNCVVSGGLLGTTNEYVELPNDVCAQYQGRSSFGRVFLQTHQTAGWIDSGFKGKITLEIVAYDKPVILYKNQRVGQLIFSKTLSPADTGYSDRECSKYAGQKSVMASLIKKDFEIDEEE.

DCTP-binding positions include 117–122 (RSSFGR), Asp135, 143–145 (TLE), Gln163, Tyr177, Lys184, and Gln188. Glu145 functions as the Proton donor/acceptor in the catalytic mechanism.

Belongs to the dCTP deaminase family. In terms of assembly, homotrimer.

The enzyme catalyses dCTP + 2 H2O = dUMP + NH4(+) + diphosphate. Its pathway is pyrimidine metabolism; dUMP biosynthesis; dUMP from dCTP: step 1/1. Its function is as follows. Bifunctional enzyme that catalyzes both the deamination of dCTP to dUTP and the hydrolysis of dUTP to dUMP without releasing the toxic dUTP intermediate. This is dCTP deaminase, dUMP-forming from Methanococcus maripaludis (strain C5 / ATCC BAA-1333).